Reading from the N-terminus, the 815-residue chain is Lon protease 2 (815 aa).

The 194-residue stretch at 19 to 212 (LPVLPLINTV…RLSVVLSQEI (194 aa)) folds into the Lon N-terminal domain. 365–372 (GPPGVGKT) is an ATP binding site. The 182-residue stretch at 601-782 (RDEIGVATGM…DEVLPIAFVS (182 aa)) folds into the Lon proteolytic domain. Catalysis depends on residues Ser688 and Lys731.

The protein belongs to the peptidase S16 family. As to quaternary structure, homohexamer. Organized in a ring with a central cavity.

The protein resides in the cytoplasm. It carries out the reaction Hydrolysis of proteins in presence of ATP.. ATP-dependent serine protease that mediates the selective degradation of mutant and abnormal proteins as well as certain short-lived regulatory proteins. Required for cellular homeostasis and for survival from DNA damage and developmental changes induced by stress. Degrades polypeptides processively to yield small peptide fragments that are 5 to 10 amino acids long. Binds to DNA in a double-stranded, site-specific manner. In Herpetosiphon aurantiacus (strain ATCC 23779 / DSM 785 / 114-95), this protein is Lon protease 2.